Here is a 55-residue protein sequence, read N- to C-terminus: MSTSRKLKSQGTRRGKNRTPHKGVKRGCSKRKYRKSSLKSRKRCDDANRNFRSHL.

Residues 1-42 (MSTSRKLKSQGTRRGKNRTPHKGVKRGCSKRKYRKSSLKSRK) show a composition bias toward basic residues. The disordered stretch occupies residues 1-55 (MSTSRKLKSQGTRRGKNRTPHKGVKRGCSKRKYRKSSLKSRKRCDDANRNFRSHL). Phosphoserine is present on residues Ser-9, Ser-36, Ser-37, and Ser-40.

Belongs to the nuclear transition protein 1 family. Testis.

It localises to the nucleus. Its subcellular location is the chromosome. Functionally, plays a key role in the replacement of histones to protamine in the elongating spermatids of mammals. In condensing spermatids, loaded onto the nucleosomes, where it promotes the recruitment and processing of protamines, which are responsible for histone eviction. The chain is Spermatid nuclear transition protein 1 (TNP1) from Ovis aries (Sheep).